The sequence spans 438 residues: Ribosomal protein uS12 methylthiotransferase RimO (438 aa).

The region spanning 1–116 (MNVGFISLGC…IWKEIENLLD (116 aa)) is the MTTase N-terminal domain. Residues cysteine 10, cysteine 46, cysteine 79, cysteine 147, cysteine 151, and cysteine 154 each contribute to the [4Fe-4S] cluster site. Positions 133–363 (TTGSNMAYLK…MALQEKISRE (231 aa)) constitute a Radical SAM core domain. The region spanning 366–435 (EQKVGNVYKV…DYDLFGELYT (70 aa)) is the TRAM domain.

The protein belongs to the methylthiotransferase family. RimO subfamily. It depends on [4Fe-4S] cluster as a cofactor.

It localises to the cytoplasm. The enzyme catalyses L-aspartate(89)-[ribosomal protein uS12]-hydrogen + (sulfur carrier)-SH + AH2 + 2 S-adenosyl-L-methionine = 3-methylsulfanyl-L-aspartate(89)-[ribosomal protein uS12]-hydrogen + (sulfur carrier)-H + 5'-deoxyadenosine + L-methionine + A + S-adenosyl-L-homocysteine + 2 H(+). Its function is as follows. Catalyzes the methylthiolation of an aspartic acid residue of ribosomal protein uS12. The sequence is that of Ribosomal protein uS12 methylthiotransferase RimO from Alkaliphilus oremlandii (strain OhILAs) (Clostridium oremlandii (strain OhILAs)).